The following is a 1450-amino-acid chain: Sister chromatid cohesion protein PDS5 homolog (1450 aa).

Disordered stretches follow at residues Met1–Lys145, Val680–Gln707, and Leu1340–Asn1450. The segment covering Asp45–Ser59 has biased composition (acidic residues). Residues Lys77–Gln138 are compositionally biased toward low complexity. Positions Lys650–Glu716 form a coiled coil. Residues Gly682 to Ser691 are compositionally biased toward polar residues. Composition is skewed to low complexity over residues Gln692–Gln707 and Asn1350–Asn1363. The segment covering Asp1369–Asn1378 has biased composition (basic and acidic residues). Positions Asn1387–Pro1401 are enriched in low complexity. A compositionally biased stretch (basic residues) spans Pro1402–Gln1427. The span at Ser1430–Asn1450 shows a compositional bias: acidic residues.

The protein belongs to the PDS5 family.

It is found in the nucleus. Its function is as follows. May regulate sister chromatid cohesion during mitosis and couple it to DNA replication. The polypeptide is Sister chromatid cohesion protein PDS5 homolog (Dictyostelium discoideum (Social amoeba)).